The following is a 221-amino-acid chain: Ependymin-2 (221 aa).

The signal sequence occupies residues 1-21; sequence MQDFAFAALSIWLCLGATALA. N33, N73, and N97 each carry an N-linked (GlcNAc...) asparagine glycan.

The protein belongs to the ependymin family. Post-translationally, binds calcium through the terminal sialic acids. EPDs are synthesized in the meninx and secreted in the cerebrospinal fluid.

The protein localises to the secreted. Functionally, may play a role in neural plasticity. May be involved during axon regeneration. The chain is Ependymin-2 (epd2) from Salmo salar (Atlantic salmon).